Here is a 929-residue protein sequence, read N- to C-terminus: Valine--tRNA ligase (929 aa).

The 'HIGH' region signature appears at 40 to 50; that stretch reads PNVTGHLHMGH. Positions 522-526 match the 'KMSKS' region motif; sequence KMSKS. Lys525 provides a ligand contact to ATP. A coiled-coil region spans residues 855 to 926; it reads LAGLIDKEAE…LEQQHAEITD (72 aa).

It belongs to the class-I aminoacyl-tRNA synthetase family. ValS type 1 subfamily. As to quaternary structure, monomer.

The protein localises to the cytoplasm. It carries out the reaction tRNA(Val) + L-valine + ATP = L-valyl-tRNA(Val) + AMP + diphosphate. In terms of biological role, catalyzes the attachment of valine to tRNA(Val). As ValRS can inadvertently accommodate and process structurally similar amino acids such as threonine, to avoid such errors, it has a 'posttransfer' editing activity that hydrolyzes mischarged Thr-tRNA(Val) in a tRNA-dependent manner. In Nitrosococcus oceani (strain ATCC 19707 / BCRC 17464 / JCM 30415 / NCIMB 11848 / C-107), this protein is Valine--tRNA ligase.